Consider the following 675-residue polypeptide: Metal-nicotianamine transporter YSL3 (675 aa).

14 helical membrane-spanning segments follow: residues 42–62, 66–86, 114–134, 159–179, 219–239, 280–300, 325–345, 386–406, 408–428, 450–470, 504–524, 556–576, 602–622, and 630–650; these read ITFR…VIVM, LTTG…FVFL, CAVA…LLGL, GIGW…LALV, VFGF…QWFF, IVNI…WPLI, VFIS…KILF, IPLW…IIAI, IMFP…APSL, VALF…AGLV, VSQA…FFLF, FSAL…FAVA, FLVG…VFAW, and AGLM…LWIL.

The protein belongs to the YSL (TC 2.A.67.2) family. In terms of tissue distribution, expressed in leaves, anthers and pollen grains. Restricted to the vasculature.

It localises to the membrane. Its function is as follows. May be involved in the lateral transport of nicotianamine-chelated metals in the vasculature. This Arabidopsis thaliana (Mouse-ear cress) protein is Metal-nicotianamine transporter YSL3 (YSL3).